The primary structure comprises 96 residues: Co-chaperonin GroES (96 aa).

Belongs to the GroES chaperonin family. Heptamer of 7 subunits arranged in a ring. Interacts with the chaperonin GroEL.

It localises to the cytoplasm. In terms of biological role, together with the chaperonin GroEL, plays an essential role in assisting protein folding. The GroEL-GroES system forms a nano-cage that allows encapsulation of the non-native substrate proteins and provides a physical environment optimized to promote and accelerate protein folding. GroES binds to the apical surface of the GroEL ring, thereby capping the opening of the GroEL channel. The protein is Co-chaperonin GroES of Alteromonas mediterranea (strain DSM 17117 / CIP 110805 / LMG 28347 / Deep ecotype).